We begin with the raw amino-acid sequence, 257 residues long: Hydroxypyruvate/pyruvate aldolase (257 aa).

H48 acts as the Proton acceptor in catalysis. 2 residues coordinate a divalent metal cation: E152 and D178.

The protein belongs to the HpcH/HpaI aldolase family. A divalent metal cation is required as a cofactor.

It catalyses the reaction D-glyceraldehyde + 3-hydroxypyruvate = 2-dehydro-D-gluconate. It carries out the reaction D-glyceraldehyde + pyruvate = 2-dehydro-3-deoxy-L-galactonate. The catalysed reaction is 2-dehydro-3-deoxy-D-gluconate = D-glyceraldehyde + pyruvate. Aldolase which can catalyze in vitro the aldolisation reaction between hydroxypyruvate (HPA) or pyruvate (PA) and D-glyceraldehyde (D-GA). The condensation of hydroxypyruvate and D-glyceraldehyde produces 2-dehydro-D-gluconate as the major product. The condensation of pyruvate and D-glyceraldehyde produces 2-dehydro-3-deoxy-L-galactonate as the major product and 2-dehydro-3-deoxy-D-gluconate. This Roseovarius nubinhibens (strain ATCC BAA-591 / DSM 15170 / ISM) protein is Hydroxypyruvate/pyruvate aldolase.